The sequence spans 222 residues: Leucyl/phenylalanyl-tRNA--protein transferase (222 aa).

It belongs to the L/F-transferase family.

It is found in the cytoplasm. It catalyses the reaction N-terminal L-lysyl-[protein] + L-leucyl-tRNA(Leu) = N-terminal L-leucyl-L-lysyl-[protein] + tRNA(Leu) + H(+). It carries out the reaction N-terminal L-arginyl-[protein] + L-leucyl-tRNA(Leu) = N-terminal L-leucyl-L-arginyl-[protein] + tRNA(Leu) + H(+). The enzyme catalyses L-phenylalanyl-tRNA(Phe) + an N-terminal L-alpha-aminoacyl-[protein] = an N-terminal L-phenylalanyl-L-alpha-aminoacyl-[protein] + tRNA(Phe). Functionally, functions in the N-end rule pathway of protein degradation where it conjugates Leu, Phe and, less efficiently, Met from aminoacyl-tRNAs to the N-termini of proteins containing an N-terminal arginine or lysine. This is Leucyl/phenylalanyl-tRNA--protein transferase from Legionella pneumophila (strain Lens).